The sequence spans 81 residues: Conotoxin ViKr92 (81 aa).

An N-terminal signal peptide occupies residues methionine 1 to alanine 22. Residues aspartate 23 to arginine 51 constitute a propeptide that is removed on maturation. 3 cysteine pairs are disulfide-bonded: cysteine 53/cysteine 70, cysteine 60/cysteine 74, and cysteine 69/cysteine 78.

This sequence belongs to the conotoxin O1 superfamily. Expressed by the venom duct.

The protein resides in the secreted. This is Conotoxin ViKr92 from Conus virgo (Virgin cone).